Reading from the N-terminus, the 488-residue chain is Putative BPI/LBP family protein At1g04970 (488 aa).

The first 24 residues, 1–24, serve as a signal peptide directing secretion; that stretch reads MDVGRCFLFLLLPSFFFLPSQTQS. N79, N109, N231, N242, and N341 each carry an N-linked (GlcNAc...) asparagine glycan.

This sequence belongs to the BPI/LBP/Plunc superfamily. BPI/LBP (TC 1.C.40) family.

The polypeptide is Putative BPI/LBP family protein At1g04970 (Arabidopsis thaliana (Mouse-ear cress)).